Consider the following 323-residue polypeptide: Prenyl transferase (323 aa).

Residues Lys-46, Arg-49, and His-81 each coordinate isopentenyl diphosphate. The Mg(2+) site is built by Asp-88 and Asp-92. An all-trans-polyprenyl diphosphate is bound at residue Arg-97. Isopentenyl diphosphate is bound at residue Arg-98. Residues Lys-174, Thr-175, and Gln-212 each coordinate an all-trans-polyprenyl diphosphate.

The protein belongs to the FPP/GGPP synthase family. Mg(2+) is required as a cofactor.

Functionally, possible role in synthesis of the nonaprenyl side chain of plastoquinone or in synthesis of other prenyl chains such as undekaprenyl pyrophosphate. This Synechocystis sp. (strain ATCC 27184 / PCC 6803 / Kazusa) protein is Prenyl transferase (preA).